Consider the following 313-residue polypeptide: tRNA dimethylallyltransferase (313 aa).

9–16 (GPTATGKS) serves as a coordination point for ATP. Substrate is bound at residue 11–16 (TATGKS).

It belongs to the IPP transferase family. Monomer. Requires Mg(2+) as cofactor.

The catalysed reaction is adenosine(37) in tRNA + dimethylallyl diphosphate = N(6)-dimethylallyladenosine(37) in tRNA + diphosphate. Functionally, catalyzes the transfer of a dimethylallyl group onto the adenine at position 37 in tRNAs that read codons beginning with uridine, leading to the formation of N6-(dimethylallyl)adenosine (i(6)A). This is tRNA dimethylallyltransferase from Nocardia farcinica (strain IFM 10152).